Here is a 387-residue protein sequence, read N- to C-terminus: UDP-Gal:alpha-D-GlcNAc-diphosphoundecaprenol alpha-1,3-galactosyltransferase (387 aa).

Belongs to the glycosyltransferase group 1 family. Glycosyltransferase 4 subfamily. Mg(2+) is required as a cofactor. Requires Mn(2+) as cofactor. Fe(2+) serves as cofactor.

The enzyme catalyses N-acetyl-alpha-D-glucosaminyl-di-trans,octa-cis-undecaprenyl diphosphate + UDP-alpha-D-galactose = alpha-D-Gal-(1-&gt;3)-alpha-D-GlcNAc-di-trans,octa-cis-undecaprenyl diphosphate + UDP + H(+). Its pathway is bacterial outer membrane biogenesis; LPS O-antigen biosynthesis. Its function is as follows. Involved in the biosynthesis of the lipopolysaccharide (LPS) O-antigen region. Catalyzes the transfer of galactose from UDP-galactose to GlcNAc-undecaprenyl diphosphate via an alpha1,3-linkage. Has strict substrate specificity. This is UDP-Gal:alpha-D-GlcNAc-diphosphoundecaprenol alpha-1,3-galactosyltransferase from Escherichia coli.